Here is a 375-residue protein sequence, read N- to C-terminus: Filamin-binding LIM protein 1 (375 aa).

A filamin-binding region spans residues methionine 1–alanine 70. Disordered regions lie at residues tryptophan 43–glutamate 119 and histidine 137–valine 176. 2 stretches are compositionally biased toward pro residues: residues phenylalanine 104 to leucine 114 and proline 140 to alanine 149. Low complexity predominate over residues proline 150–serine 159. LIM zinc-binding domains follow at residues aspartate 183–arginine 244, cysteine 245–alanine 302, and proline 303–alanine 372. The tract at residues isoleucine 278–cysteine 375 is FERMT2-binding.

As to quaternary structure, interacts with FERMT2, FLNA, FLNB and FLNC. Interacts with NKX2-5.

The protein resides in the cell junction. Its subcellular location is the focal adhesion. It is found in the cytoplasm. The protein localises to the cytoskeleton. It localises to the stress fiber. Serves as an anchoring site for cell-ECM adhesion proteins and filamin-containing actin filaments. Is implicated in cell shape modulation (spreading) and motility. May participate in the regulation of filamin-mediated cross-linking and stabilization of actin filaments. May also regulate the assembly of filamin-containing signaling complexes that control actin assembly. Promotes dissociation of FLNA from ITGB3 and ITGB7. Promotes activation of integrins and regulates integrin-mediated cell-cell adhesion. The protein is Filamin-binding LIM protein 1 (FBLIM1) of Pongo abelii (Sumatran orangutan).